The primary structure comprises 209 residues: uncharacterized protein (209 aa).

It belongs to the flavoredoxin family. Requires FMN as cofactor.

This is an uncharacterized protein from Halalkalibacterium halodurans (strain ATCC BAA-125 / DSM 18197 / FERM 7344 / JCM 9153 / C-125) (Bacillus halodurans).